Consider the following 255-residue polypeptide: Postacrosomal sheath WW domain-binding protein (255 aa).

In terms of domain architecture, GRAM spans 15-87 (LIPNGESLLK…DLITNLTVEQ (73 aa)). 7 consecutive repeat copies span residues 139–145 (YGAPPAG), 146–152 (YGAPPAG), 153–159 (YGAPPPG), 160–166 (YGAPPAG), 167–173 (YGAPPPG), 174–180 (YGAPPAG), and 202–208 (YGAPPLG). The 6 X 7 AA tandem repeat of Y-G-X-P-P-X-G stretch occupies residues 139 to 208 (YGAPPAGYGA…PAGYGAPPLG (70 aa)). The short motif at 171–174 (PPGY) is the PPxY motif element. 2 disordered regions span residues 180 to 199 (GYGA…RASP) and 204 to 255 (APPL…ASSS).

In terms of biological role, may play a role in meiotic resumption and pronuclear formation, mediated by a WW domain-signaling pathway during fertilization. This is Postacrosomal sheath WW domain-binding protein (WBP2NL) from Macaca fascicularis (Crab-eating macaque).